Reading from the N-terminus, the 306-residue chain is Putative S-adenosyl-L-methionine-dependent methyltransferase MAP_4190c (306 aa).

S-adenosyl-L-methionine-binding positions include Asp-129 and 158 to 159 (DL).

It belongs to the UPF0677 family.

Its function is as follows. Exhibits S-adenosyl-L-methionine-dependent methyltransferase activity. This Mycolicibacterium paratuberculosis (strain ATCC BAA-968 / K-10) (Mycobacterium paratuberculosis) protein is Putative S-adenosyl-L-methionine-dependent methyltransferase MAP_4190c.